Consider the following 260-residue polypeptide: Vesicle-associated membrane protein 7B (260 aa).

Residues 1–189 (MPIIYSLVAR…KCAMWWKNVK (189 aa)) lie on the Cytoplasmic side of the membrane. In terms of domain architecture, Longin spans 7 to 110 (LVARGSSVLA…GMNSDFSRTL (104 aa)). The 62-residue stretch at 125–186 (TMSRTMAEID…KQLKCAMWWK (62 aa)) folds into the v-SNARE coiled-coil homology domain. A helical; Anchor for type IV membrane protein transmembrane segment spans residues 190–210 (LMLVLGAIVLIIIFIIVMSYC). At 211–260 (DGFRSGSKCRSSPSSNSTPTPTPTETPTPTPTPTSTPTPSQLLETLLNQF) the chain is on the vesicular side. Residues 215–250 (SGSKCRSSPSSNSTPTPTPTETPTPTPTPTSTPTPS) form a disordered region. Over residues 230–246 (TPTPTETPTPTPTPTST) the composition is skewed to pro residues.

This sequence belongs to the synaptobrevin family.

It localises to the cytoplasmic vesicle. Its subcellular location is the secretory vesicle membrane. It is found in the golgi apparatus. The protein resides in the trans-Golgi network membrane. The protein localises to the late endosome membrane. It localises to the lysosome membrane. Its subcellular location is the endoplasmic reticulum membrane. It is found in the phagosome membrane. Functionally, involved in the targeting and/or fusion of transport vesicles to their target membrane during transport of proteins from the early endosome to the lysosome. Required for heterotypic fusion of late endosomes with lysosomes and homotypic lysosomal fusion. The sequence is that of Vesicle-associated membrane protein 7B from Dictyostelium discoideum (Social amoeba).